Consider the following 348-residue polypeptide: Competence protein ComGA (348 aa).

Position 145–152 (145–152) interacts with ATP; it reads GATGSGKT.

The protein belongs to the GSP E family.

It localises to the cell membrane. In terms of biological role, required for uptake of DNA by competent cells. The chain is Competence protein ComGA (comGA) from Halalkalibacterium halodurans (strain ATCC BAA-125 / DSM 18197 / FERM 7344 / JCM 9153 / C-125) (Bacillus halodurans).